The primary structure comprises 435 residues: Large ribosomal subunit protein mL65 (435 aa).

This sequence belongs to the mitochondrion-specific ribosomal protein mL65 family. As to quaternary structure, component of the mitochondrial ribosome small subunit (28S) which comprises a 12S rRNA and about 30 distinct proteins.

It localises to the mitochondrion. This chain is Large ribosomal subunit protein mL65 (MRPS30), found in Bos taurus (Bovine).